A 193-amino-acid chain; its full sequence is Ion-translocating oxidoreductase complex subunit A (193 aa).

6 helical membrane-spanning segments follow: residues 4–24 (FLLL…QFLG), 39–59 (IGMS…SYLV), 63–83 (ILLP…VIAV), 102–122 (LLGI…VALL), 134–154 (VIYG…FAAM), and 171–191 (SISM…TGLV).

It belongs to the NqrDE/RnfAE family. As to quaternary structure, the complex is composed of six subunits: RnfA, RnfB, RnfC, RnfD, RnfE and RnfG.

The protein localises to the cell inner membrane. Its function is as follows. Part of a membrane-bound complex that couples electron transfer with translocation of ions across the membrane. This Pseudoalteromonas atlantica (strain T6c / ATCC BAA-1087) protein is Ion-translocating oxidoreductase complex subunit A.